The chain runs to 71 residues: MPIIKVRENESFDVALRRFKRSCEKSGILSEVRRREFYEKPTTERKRAKASAIKRHIKKLSRENLRRIRLY.

The protein belongs to the bacterial ribosomal protein bS21 family.

The sequence is that of Small ribosomal subunit protein bS21 from Blochmanniella pennsylvanica (strain BPEN).